Here is a 644-residue protein sequence, read N- to C-terminus: Exoribonuclease 2 (644 aa).

Positions Arg189 to Lys516 constitute an RNB domain. One can recognise an S1 motif domain in the interval Asp561–Val643.

It belongs to the RNR ribonuclease family. RNase II subfamily.

Its subcellular location is the cytoplasm. It catalyses the reaction Exonucleolytic cleavage in the 3'- to 5'-direction to yield nucleoside 5'-phosphates.. Functionally, involved in mRNA degradation. Hydrolyzes single-stranded polyribonucleotides processively in the 3' to 5' direction. The sequence is that of Exoribonuclease 2 from Cronobacter sakazakii (strain ATCC BAA-894) (Enterobacter sakazakii).